The sequence spans 697 residues: MWSRAIFQRFRFRAFSISHVIHGKCYRSFSVTVEFQNREVLICNHLLSRRIDEAREVFNQVPSPHVSLYTKMITGYTRSNRLVDALNLFDEMPVRDVVSWNSMISGCVECGDMNTAVKLFDEMPERSVVSWTAMVNGCFRSGKVDQAERLFYQMPVKDTAAWNSMVHGYLQFGKVDDALKLFKQMPGKNVISWTTMICGLDQNERSGEALDLFKNMLRCCIKSTSRPFTCVITACANAPAFHMGIQVHGLIIKLGFLYEEYVSASLITFYANCKRIGDSRKVFDEKVHEQVAVWTALLSGYSLNKKHEDALSIFSGMLRNSILPNQSTFASGLNSCSALGTLDWGKEMHGVAVKLGLETDAFVGNSLVVMYSDSGNVNDAVSVFIKIFKKSIVSWNSIIVGCAQHGRGKWAFVIFGQMIRLNKEPDEITFTGLLSACSHCGFLEKGRKLFYYMSSGINHIDRKIQHYTCMVDILGRCGKLKEAEELIERMVVKPNEMVWLALLSACRMHSDVDRGEKAAAAIFNLDSKSSAAYVLLSNIYASAGRWSNVSKLRVKMKKNGIMKKPGSSWVVIRGKKHEFFSGDQPHCSRIYEKLEFLREKLKELGYAPDYRSALHDVEDEQKEEMLWYHSERLAIAFGLINTVEGSAVTVMKNLRVCEDCHTVIKLISGVVGREIVLRDPIRFHHFKNGTCSCGDYW.

Residues 1-36 (MWSRAIFQRFRFRAFSISHVIHGKCYRSFSVTVEFQ) constitute a mitochondrion transit peptide. PPR repeat units follow at residues 39-64 (EVLI…VPSP), 65-95 (HVSL…MPVR), 96-130 (DVVS…SVVS), 131-157 (WTAM…MPVK), 158-192 (DTAA…NVIS), 193-223 (WTTM…CIKS), 224-258 (TSRP…GFLY), 259-289 (EEYV…KVHE), 290-324 (QVAV…SILP), 325-359 (NQST…GLET), 360-390 (DAFV…IFKK), 391-425 (SIVS…NKEP), 426-456 (DEIT…MSSG), and 463-497 (KIQH…PNEM). The segment at 498–573 (VWLALLSACR…KPGSSWVVIR (76 aa)) is type E motif. The tract at residues 574–602 (GKKHEFFSGDQPHCSRIYEKLEFLREKLK) is type E(+) motif. The interval 603-697 (ELGYAPDYRS…NGTCSCGDYW (95 aa)) is type DYW motif.

This sequence belongs to the PPR family. PCMP-H subfamily.

The protein localises to the mitochondrion. The protein is Pentatricopeptide repeat-containing protein At5g46460, mitochondrial (PCMP-H49) of Arabidopsis thaliana (Mouse-ear cress).